Consider the following 1405-residue polypeptide: Protein translocase subunit SecA (1405 aa).

Residues 1–1099 are protein translocase subunit SecA; sequence MHMKIKKFKK…SDYKKLNEDE (1099 aa). Residues Gln-88, 106-110, and Asp-494 contribute to the ATP site; that span reads GEGKS. The tract at residues 1100-1405 is unknown; the sequence is SDDDIKAFYK…LDYLKENNKK (306 aa).

This sequence belongs to the SecA family. As to quaternary structure, monomer and homodimer. Part of the essential Sec protein translocation apparatus which comprises SecA, SecYEG and auxiliary proteins SecDF. Other proteins may also be involved.

It is found in the cell membrane. Its subcellular location is the cytoplasm. It catalyses the reaction ATP + H2O + cellular proteinSide 1 = ADP + phosphate + cellular proteinSide 2.. Its function is as follows. Part of the Sec protein translocase complex. Interacts with the SecYEG preprotein conducting channel. Has a central role in coupling the hydrolysis of ATP to the transfer of proteins into and across the cell membrane, serving as an ATP-driven molecular motor driving the stepwise translocation of polypeptide chains across the membrane. The polypeptide is Protein translocase subunit SecA (Malacoplasma penetrans (strain HF-2) (Mycoplasma penetrans)).